We begin with the raw amino-acid sequence, 251 residues long: Imidazole glycerol phosphate synthase subunit HisF (251 aa).

Active-site residues include Asp11 and Asp130.

Belongs to the HisA/HisF family. In terms of assembly, heterodimer of HisH and HisF.

It is found in the cytoplasm. The catalysed reaction is 5-[(5-phospho-1-deoxy-D-ribulos-1-ylimino)methylamino]-1-(5-phospho-beta-D-ribosyl)imidazole-4-carboxamide + L-glutamine = D-erythro-1-(imidazol-4-yl)glycerol 3-phosphate + 5-amino-1-(5-phospho-beta-D-ribosyl)imidazole-4-carboxamide + L-glutamate + H(+). Its pathway is amino-acid biosynthesis; L-histidine biosynthesis; L-histidine from 5-phospho-alpha-D-ribose 1-diphosphate: step 5/9. Functionally, IGPS catalyzes the conversion of PRFAR and glutamine to IGP, AICAR and glutamate. The HisF subunit catalyzes the cyclization activity that produces IGP and AICAR from PRFAR using the ammonia provided by the HisH subunit. In Chlorobium phaeobacteroides (strain BS1), this protein is Imidazole glycerol phosphate synthase subunit HisF.